The following is an 89-amino-acid chain: Small ribosomal subunit protein uS15 (89 aa).

This sequence belongs to the universal ribosomal protein uS15 family. As to quaternary structure, part of the 30S ribosomal subunit. Forms a bridge to the 50S subunit in the 70S ribosome, contacting the 23S rRNA.

Functionally, one of the primary rRNA binding proteins, it binds directly to 16S rRNA where it helps nucleate assembly of the platform of the 30S subunit by binding and bridging several RNA helices of the 16S rRNA. In terms of biological role, forms an intersubunit bridge (bridge B4) with the 23S rRNA of the 50S subunit in the ribosome. The sequence is that of Small ribosomal subunit protein uS15 from Streptococcus agalactiae serotype Ia (strain ATCC 27591 / A909 / CDC SS700).